A 437-amino-acid chain; its full sequence is UDP-glucose 6-dehydrogenase (437 aa).

NAD(+)-binding residues include Val11, Asp30, Lys35, Thr86, Thr122, and Glu155. Substrate contacts are provided by residues 151 to 155 (EFLRE), Lys209, Asn213, 254 to 258 (FLHAG), and Gly262. Cys265 serves as the catalytic Nucleophile. NAD(+) is bound at residue Lys268. Residue Lys326 coordinates substrate. Arg333 is a binding site for NAD(+).

The protein belongs to the UDP-glucose/GDP-mannose dehydrogenase family.

It catalyses the reaction UDP-alpha-D-glucose + 2 NAD(+) + H2O = UDP-alpha-D-glucuronate + 2 NADH + 3 H(+). It functions in the pathway nucleotide-sugar biosynthesis; UDP-alpha-D-glucuronate biosynthesis; UDP-alpha-D-glucuronate from UDP-alpha-D-glucose: step 1/1. It participates in capsule biogenesis; capsule polysaccharide biosynthesis. The protein is UDP-glucose 6-dehydrogenase of Rhizobium meliloti (strain 1021) (Ensifer meliloti).